A 302-amino-acid polypeptide reads, in one-letter code: Bifunctional ligase/repressor BirA (302 aa).

Positions 14–33 form a DNA-binding region, H-T-H motif; that stretch reads QPKVRSELEKFSKNLEEDIQ. The BPL/LPL catalytic domain maps to 62–236; sequence QISTALFPYS…HLYTRLNIFE (175 aa). Residues 80-82, glutamine 103, 107-109, and lysine 167 contribute to the biotin site; these read STN and RGR.

This sequence belongs to the biotin--protein ligase family.

The enzyme catalyses biotin + L-lysyl-[protein] + ATP = N(6)-biotinyl-L-lysyl-[protein] + AMP + diphosphate + H(+). Functionally, acts both as a biotin--[acetyl-CoA-carboxylase] ligase and a biotin-operon repressor. In the presence of ATP, BirA activates biotin to form the BirA-biotinyl-5'-adenylate (BirA-bio-5'-AMP or holoBirA) complex. HoloBirA can either transfer the biotinyl moiety to the biotin carboxyl carrier protein (BCCP) subunit of acetyl-CoA carboxylase, or bind to the biotin operator site and inhibit transcription of the operon. In Haemophilus influenzae (strain ATCC 51907 / DSM 11121 / KW20 / Rd), this protein is Bifunctional ligase/repressor BirA.